Consider the following 194-residue polypeptide: Porimin (194 aa).

An N-terminal signal peptide occupies residues 1–24; sequence MALCARAALLLGALQVLALPGAVA. Residues 25–151 are Extracellular-facing; it reads QETYAQGSPS…PTKGKGSKFD (127 aa). Asn36, Asn47, Asn51, Asn59, Asn76, and Asn114 each carry an N-linked (GlcNAc...) asparagine glycan. Positions 88-124 are disordered; that stretch reads KVSTPGVSPHVTPSASKSTPKTSASPNSTQTSASMTT. Over residues 99 to 124 the composition is skewed to low complexity; that stretch reads TPSASKSTPKTSASPNSTQTSASMTT. Residues 152-172 traverse the membrane as a helical segment; sequence AGSFVGGIVLTLGVLSILYIG. The Cytoplasmic portion of the chain corresponds to 173–194; sequence CKMYYSRRGIRYRSIDEHDAII. The residue at position 186 (Ser186) is a Phosphoserine.

The protein belongs to the CD164 family.

The protein localises to the membrane. Its function is as follows. Implicated in oncotic cell death, characterized by cell swelling, organelle swelling, vacuolization and increased membrane permeability. This Rattus norvegicus (Rat) protein is Porimin (Tmem123).